The chain runs to 451 residues: F-box/LRR-repeat protein 13 (451 aa).

The F-box domain occupies Val17–Phe70. 4 LRR repeats span residues Asp128–Gly155, Thr177–Arg202, Val224–Asp251, and Cys335–Ser363. The 52-residue stretch at Gly370–Leu421 folds into the FBD domain.

This chain is F-box/LRR-repeat protein 13 (FBL13), found in Arabidopsis thaliana (Mouse-ear cress).